We begin with the raw amino-acid sequence, 569 residues long: Urease subunit alpha (569 aa).

Ni(2+)-binding residues include His136, His138, and Lys219. Lys219 carries the N6-carboxylysine modification. His221 is a binding site for substrate. Ni(2+)-binding residues include His248 and His274. His322 functions as the Proton donor in the catalytic mechanism. Position 362 (Asp362) interacts with Ni(2+).

Belongs to the metallo-dependent hydrolases superfamily. Urease alpha subunit family. Heterotrimer of UreA (gamma), UreB (beta) and UreC (alpha) subunits. Three heterotrimers associate to form the active enzyme. Ni cation serves as cofactor. In terms of processing, carboxylation allows a single lysine to coordinate two nickel ions.

It localises to the cytoplasm. The enzyme catalyses urea + 2 H2O + H(+) = hydrogencarbonate + 2 NH4(+). It participates in nitrogen metabolism; urea degradation; CO(2) and NH(3) from urea (urease route): step 1/1. This chain is Urease subunit alpha, found in Dinoroseobacter shibae (strain DSM 16493 / NCIMB 14021 / DFL 12).